The following is a 66-amino-acid chain: Large ribosomal subunit protein bL33c (66 aa).

It belongs to the bacterial ribosomal protein bL33 family.

The protein localises to the plastid. The protein resides in the chloroplast. In Daucus carota (Wild carrot), this protein is Large ribosomal subunit protein bL33c.